Consider the following 345-residue polypeptide: Methionine import ATP-binding protein MetN (345 aa).

In terms of domain architecture, ABC transporter spans 2 to 241; the sequence is IKLKNISKIF…PKTELAQEFI (240 aa). Residue 38–45 coordinates ATP; that stretch reads GASGAGKS.

It belongs to the ABC transporter superfamily. Methionine importer (TC 3.A.1.24) family. As to quaternary structure, the complex is composed of two ATP-binding proteins (MetN), two transmembrane proteins (MetI) and a solute-binding protein (MetQ).

It is found in the cell inner membrane. The catalysed reaction is L-methionine(out) + ATP + H2O = L-methionine(in) + ADP + phosphate + H(+). The enzyme catalyses D-methionine(out) + ATP + H2O = D-methionine(in) + ADP + phosphate + H(+). In terms of biological role, part of the ABC transporter complex MetNIQ involved in methionine import. Responsible for energy coupling to the transport system. In Mannheimia succiniciproducens (strain KCTC 0769BP / MBEL55E), this protein is Methionine import ATP-binding protein MetN.